We begin with the raw amino-acid sequence, 280 residues long: F420-dependent methylenetetrahydromethanopterin dehydrogenase (280 aa).

The protein belongs to the MTD family.

The enzyme catalyses 5,10-methylenetetrahydromethanopterin + oxidized coenzyme F420-(gamma-L-Glu)(n) + 2 H(+) = 5,10-methenyl-5,6,7,8-tetrahydromethanopterin + reduced coenzyme F420-(gamma-L-Glu)(n). It functions in the pathway one-carbon metabolism; methanogenesis from CO(2); 5,10-methylene-5,6,7,8-tetrahydromethanopterin from 5,10-methenyl-5,6,7,8-tetrahydromethanopterin (coenzyme F420 route): step 1/1. Its function is as follows. Catalyzes the reversible reduction of methenyl-H(4)MPT(+) to methylene-H(4)MPT. The chain is F420-dependent methylenetetrahydromethanopterin dehydrogenase from Methanocorpusculum labreanum (strain ATCC 43576 / DSM 4855 / Z).